The primary structure comprises 396 residues: Tryptophan synthase beta chain (396 aa).

Lys86 is modified (N6-(pyridoxal phosphate)lysine).

This sequence belongs to the TrpB family. As to quaternary structure, tetramer of two alpha and two beta chains. Pyridoxal 5'-phosphate serves as cofactor.

It catalyses the reaction (1S,2R)-1-C-(indol-3-yl)glycerol 3-phosphate + L-serine = D-glyceraldehyde 3-phosphate + L-tryptophan + H2O. The protein operates within amino-acid biosynthesis; L-tryptophan biosynthesis; L-tryptophan from chorismate: step 5/5. The beta subunit is responsible for the synthesis of L-tryptophan from indole and L-serine. In Aliivibrio salmonicida (strain LFI1238) (Vibrio salmonicida (strain LFI1238)), this protein is Tryptophan synthase beta chain.